Consider the following 808-residue polypeptide: Dynamin-related protein 3A (808 aa).

The disordered stretch occupies residues 1-31; that stretch reads MTIEEVSGETPPSTPPSSSTPSPSSSTTNAA. Residues 16–28 show a composition bias toward low complexity; the sequence is PSSSTPSPSSSTT. The 275-residue stretch at 56-330 folds into the Dynamin-type G domain; that stretch reads TIALPQVVVV…LVQHIKVLLP (275 aa). Residues 66-73 form a G1 motif region; sequence GSQSSGKS. Residue 66–73 participates in GTP binding; sequence GSQSSGKS. The tract at residues 92 to 94 is G2 motif; it reads CTR. Positions 172-175 are G3 motif; it reads DLPG. Residues 172–176 and 241–244 each bind GTP; these read DLPGI and TKLD. The G4 motif stretch occupies residues 241–244; it reads TKLD. Residues 271-274 form a G5 motif region; sequence VNRC. The disordered stretch occupies residues 548 to 578; it reads IPHPVARPKDTVEPDRTSSSTSQVKSRSFLG. Over residues 554-563 the composition is skewed to basic and acidic residues; it reads RPKDTVEPDR. Over residues 564–575 the composition is skewed to low complexity; the sequence is TSSSTSQVKSRS. Residues 670-761 form the GED domain; it reads IQITKLLLRS…TLDELPLEAD (92 aa). The segment at 774–808 is disordered; the sequence is LTSSKYSTSSSYSASPSTTRRSRRAGDQHQNGYGF. A compositionally biased stretch (low complexity) spans 775–792; that stretch reads TSSKYSTSSSYSASPSTT.

It belongs to the TRAFAC class dynamin-like GTPase superfamily. Dynamin/Fzo/YdjA family. In terms of assembly, homooligomer. Interacts with ARC5 on peroxisomes and ELM1 on mitochondria. In terms of tissue distribution, ubiquitous. Preferentially expressed in flowers.

Its subcellular location is the mitochondrion. The protein localises to the peroxisome. Involved in the control of mitochondrial and peroxisomal division and morphology. In association with PEX11C, PEX11D, PEX11E and FIS1B, is involved in cell cycle-associated constitutive self-replication of preexisting peroxisomes. In Arabidopsis thaliana (Mouse-ear cress), this protein is Dynamin-related protein 3A (DRP3A).